The sequence spans 455 residues: Zinc finger SWIM domain-containing protein 1 (455 aa).

The disordered stretch occupies residues 264–288 (ASLSLAETPQDSHTPSEASAENPNT). An SWIM-type zinc finger spans residues 333–375 (MSIQILEDTHTVQPQPPASCSCYFNQAFHLPCRHILAMLSARQ).

In Mus musculus (Mouse), this protein is Zinc finger SWIM domain-containing protein 1 (Zswim1).